A 266-amino-acid chain; its full sequence is MAELHWTRQWRGWEGVAAVRWATAAARAADPPALALRGRHPADTAASPPPPRTAGARARTSGADGRRRGRPLGPAQRGRYLLRDTRQTLGREPKSFLCRLCCQEDPELDSDKDETGAYLIDRDPTYFGPILNYLRHGKLIITKELGEEGVLEEAEFYNIASLVRLVKERIRDNENRTSQGPVKHVYRVLQCQEEELTQMVSTMSDGWKFEQLISIGSSYNYGNQDQAEFLCVVSRELNNSTNGIVIEPSEKPRFFRKRALECERTV.

Residue A2 is modified to N-acetylalanine. A disordered region spans residues 38–79; sequence GRHPADTAASPPPPRTAGARARTSGADGRRRGRPLGPAQRGR. Low complexity predominate over residues 53–63; it reads TAGARARTSGA. The BTB domain occupies 76 to 174; that stretch reads QRGRYLLRDT…LVKERIRDNE (99 aa).

This chain is BTB/POZ domain-containing protein KCTD2 (Kctd2), found in Mus musculus (Mouse).